Reading from the N-terminus, the 339-residue chain is Small ribosomal subunit protein uS3m (339 aa).

It belongs to the universal ribosomal protein uS3 family.

The protein resides in the mitochondrion. In terms of biological role, essential for mitochondrial protein synthesis and required for the maturation of small ribosomal subunits. This Candida glabrata (strain ATCC 2001 / BCRC 20586 / JCM 3761 / NBRC 0622 / NRRL Y-65 / CBS 138) (Yeast) protein is Small ribosomal subunit protein uS3m (VAR1).